The following is a 74-amino-acid chain: UPF0435 protein GK0418 (74 aa).

Belongs to the UPF0435 family.

The chain is UPF0435 protein GK0418 from Geobacillus kaustophilus (strain HTA426).